The primary structure comprises 111 residues: uncharacterized protein (111 aa).

The stretch at 4–51 (LGQVKVLEEKVAKAVHLVQMLKEENAALRAEIDGRGKRITELEQLVLX) forms a coiled coil.

This is an uncharacterized protein from Treponema pallidum (strain Nichols).